A 594-amino-acid polypeptide reads, in one-letter code: Cytoplasmic polyadenylation element-binding protein 2 (594 aa).

Over residues 72–90 (KEREKVDEEKEGVERREEN) the composition is skewed to basic and acidic residues. Disordered stretches follow at residues 72–91 (KERE…EENG) and 367–388 (GGGF…STSE). Positions 367 to 378 (GGGFNSGSGSGN) are enriched in gly residues. Residues 458–540 (LVAFIGGVPR…KRVEIKPYFF (83 aa)) form the RRM domain.

Functionally, cytoplasmic polyadenylation element binding protein that binds to and regulates the translation of specific mRNAs. This is Cytoplasmic polyadenylation element-binding protein 2 (cpb-2) from Caenorhabditis japonica.